Consider the following 1045-residue polypeptide: MAGNDWINSYLEAILDVGPGLDDAKSSLLLRERGRFSPTRYFVEEVITGFDETDLHRSWVRAQATRSPQERNTRLENMCWRIWNLARQKKQLENEEAQRKTKRRMELERGRREATADMSEDLSEGEKDISAHGDSTRPRLPRINSLDAMETWISQQKEKKLYLVLISLHGLIRGENMELGRDSDTGGQVKYVVELARALGSMPGVYRVDLLTRQVSSPDVDWSYGEPTEMLNPRDSNGFDDDDDEMGESSGAYIVRIPFGPRDKYIAKEELWPYIPEFVDGALNHIVQMSKVLGEQIGSGETVWPVAIHGHYADAGDSAALLSGGLNVPMLLTGHSLGRDKLEQLLKQGRMSKDDINNTYKIMRRIEAEELSLDASEIVITSTRQEIEEQWHLYDGFDPVLERKLRARMKRGVSCYGRFMPRMVVIPPGMEFNHIVPHEGDMDGETEETEEHPTSPDPPIWAEIMRFFSKPRKPMILALARPDPKKNITTLVKAFGECRPLRELANLTLIMGNRDGIDEMSSTSSSVLLSVLKLIDQYDLYGQVAYPKHHKQADVPEIYRLAAKTKGVFINPAFIEPFGLTLIEAAAHGLPMVATKNGGPVDIQRVLDNGLLVDPHEQQSIATALLKLVADKQLWTKCQQNGLKNIHLYSWPEHSKTYLSRIASSRQRQPQWQRSSDEGLDNQEPESPSDSLRDIKDISLNLEVLVRPEKRVKTLKILGLMTKANSRMLLCSWSNGVHKMLRKARFSDKVDQASSKYPAFRRRKLIYVIAVDGDYEDGLFDIVRRIFDAAGKEKIEGSIGFILSTSYSMPEIQNYLLSKGFNLHDFDAYICNSGSELYYSSLNSEESNIIADSDYHSHIEYRWGGEGLRRTLLRWAASITEKNGENEEQVITEDEEVSTGYCFAFKIKNQNKVPPTKELRKSMRIQALRCHVIYCQNGSKMNVIPVLASRSQALRYLYVRWGVELSKMVVFVGECGDTDYEGLLGGVHKTVILKGVSNTALRSLHANRSYPLSHVVSLDSPNIGEVSKGCSSSEIQSIVTKLSKA.

2 stretches are compositionally biased toward basic and acidic residues: residues 93-115 (ENEE…REAT) and 124-137 (EGEK…DSTR). Disordered regions lie at residues 93–141 (ENEE…PRLP), 222–243 (WSYG…DDDD), and 662–692 (IASS…SDSL). Residues 664–674 (SSRQRQPQWQR) are compositionally biased toward low complexity.

Belongs to the glycosyltransferase 1 family. As to quaternary structure, homodimer or homotetramer. As to expression, predominantly active in tap root.

The catalysed reaction is beta-D-fructose 6-phosphate + UDP-alpha-D-glucose = sucrose 6(F)-phosphate + UDP + H(+). Its pathway is glycan biosynthesis; sucrose biosynthesis; sucrose from D-fructose 6-phosphate and UDP-alpha-D-glucose: step 1/2. With respect to regulation, activity is regulated by phosphorylation and moderated by concentration of metabolites and light. In terms of biological role, plays a role in photosynthetic sucrose synthesis by catalyzing the rate-limiting step of sucrose biosynthesis from UDP-glucose and fructose- 6-phosphate. Involved in the regulation of carbon partitioning in the leaves of plants. May regulate the synthesis of sucrose and therefore play a major role as a limiting factor in the export of photoassimilates out of the leaf. Plays a role for sucrose availability that is essential for plant growth and fiber elongation. This Beta vulgaris (Sugar beet) protein is Probable sucrose-phosphate synthase (SPS).